The primary structure comprises 311 residues: Protoheme IX farnesyltransferase 1 (311 aa).

9 helical membrane-spanning segments follow: residues Val-31–Asn-51, Pro-52–Leu-72, Val-97–Leu-117, Val-119–Ile-139, Ile-152–Gly-172, Leu-179–Phe-199, Ile-225–Thr-245, Gly-247–Val-267, and Leu-281–Ile-301.

The protein belongs to the UbiA prenyltransferase family. Protoheme IX farnesyltransferase subfamily.

The protein localises to the cell inner membrane. The catalysed reaction is heme b + (2E,6E)-farnesyl diphosphate + H2O = Fe(II)-heme o + diphosphate. Its pathway is porphyrin-containing compound metabolism; heme O biosynthesis; heme O from protoheme: step 1/1. In terms of biological role, converts heme B (protoheme IX) to heme O by substitution of the vinyl group on carbon 2 of heme B porphyrin ring with a hydroxyethyl farnesyl side group. In Mesorhizobium japonicum (strain LMG 29417 / CECT 9101 / MAFF 303099) (Mesorhizobium loti (strain MAFF 303099)), this protein is Protoheme IX farnesyltransferase 1.